Consider the following 190-residue polypeptide: Elongation factor P (190 aa).

The protein belongs to the elongation factor P family.

It is found in the cytoplasm. Its pathway is protein biosynthesis; polypeptide chain elongation. Functionally, involved in peptide bond synthesis. Stimulates efficient translation and peptide-bond synthesis on native or reconstituted 70S ribosomes in vitro. Probably functions indirectly by altering the affinity of the ribosome for aminoacyl-tRNA, thus increasing their reactivity as acceptors for peptidyl transferase. The polypeptide is Elongation factor P (Persephonella marina (strain DSM 14350 / EX-H1)).